Here is a 510-residue protein sequence, read N- to C-terminus: Maturase K (510 aa).

Belongs to the intron maturase 2 family. MatK subfamily.

The protein localises to the plastid. Its subcellular location is the chloroplast. In terms of biological role, usually encoded in the trnK tRNA gene intron. Probably assists in splicing its own and other chloroplast group II introns. The polypeptide is Maturase K (Gratiola officinalis (Hedgehyssop)).